Here is a 493-residue protein sequence, read N- to C-terminus: Probable mannosyl-oligosaccharide alpha-1,2-mannosidase 1B (493 aa).

An N-terminal signal peptide occupies residues 1-18 (MHLPSLSVALALVSSSLA). Asparagine 87 and asparagine 174 each carry an N-linked (GlcNAc...) asparagine glycan. Cysteine 324 and cysteine 353 form a disulfide bridge. Catalysis depends on glutamate 367, which acts as the Proton donor. N-linked (GlcNAc...) asparagine glycosylation occurs at asparagine 489.

This sequence belongs to the glycosyl hydrolase 47 family. As to quaternary structure, monomer. Requires Ca(2+) as cofactor. Mg(2+) serves as cofactor.

It is found in the cytoplasmic vesicle lumen. The catalysed reaction is N(4)-(alpha-D-Man-(1-&gt;2)-alpha-D-Man-(1-&gt;2)-alpha-D-Man-(1-&gt;3)-[alpha-D-Man-(1-&gt;2)-alpha-D-Man-(1-&gt;3)-[alpha-D-Man-(1-&gt;2)-alpha-D-Man-(1-&gt;6)]-alpha-D-Man-(1-&gt;6)]-beta-D-Man-(1-&gt;4)-beta-D-GlcNAc-(1-&gt;4)-beta-D-GlcNAc)-L-asparaginyl-[protein] (N-glucan mannose isomer 9A1,2,3B1,2,3) + 4 H2O = N(4)-(alpha-D-Man-(1-&gt;3)-[alpha-D-Man-(1-&gt;3)-[alpha-D-Man-(1-&gt;6)]-alpha-D-Man-(1-&gt;6)]-beta-D-Man-(1-&gt;4)-beta-D-GlcNAc-(1-&gt;4)-beta-D-GlcNAc)-L-asparaginyl-[protein] (N-glucan mannose isomer 5A1,2) + 4 beta-D-mannose. It carries out the reaction N(4)-(alpha-D-Man-(1-&gt;2)-alpha-D-Man-(1-&gt;2)-alpha-D-Man-(1-&gt;3)-[alpha-D-Man-(1-&gt;3)-[alpha-D-Man-(1-&gt;2)-alpha-D-Man-(1-&gt;6)]-alpha-D-Man-(1-&gt;6)]-beta-D-Man-(1-&gt;4)-beta-D-GlcNAc-(1-&gt;4)-beta-D-GlcNAc)-L-asparaginyl-[protein] (N-glucan mannose isomer 8A1,2,3B1,3) + 3 H2O = N(4)-(alpha-D-Man-(1-&gt;3)-[alpha-D-Man-(1-&gt;3)-[alpha-D-Man-(1-&gt;6)]-alpha-D-Man-(1-&gt;6)]-beta-D-Man-(1-&gt;4)-beta-D-GlcNAc-(1-&gt;4)-beta-D-GlcNAc)-L-asparaginyl-[protein] (N-glucan mannose isomer 5A1,2) + 3 beta-D-mannose. It participates in protein modification; protein glycosylation. Its function is as follows. Involved in the maturation of Asn-linked oligosaccharides. Progressively trims alpha-1,2-linked mannose residues from Man(9)GlcNAc(2) to produce Man(5)GlcNAc(2). The protein is Probable mannosyl-oligosaccharide alpha-1,2-mannosidase 1B (mns1B) of Neosartorya fischeri (strain ATCC 1020 / DSM 3700 / CBS 544.65 / FGSC A1164 / JCM 1740 / NRRL 181 / WB 181) (Aspergillus fischerianus).